A 173-amino-acid polypeptide reads, in one-letter code: Ribosome maturation factor RimM (173 aa).

A PRC barrel domain is found at 94-166 (VQEEPYIDII…KIIVELPMGF (73 aa)).

This sequence belongs to the RimM family. As to quaternary structure, binds ribosomal protein uS19.

It is found in the cytoplasm. Its function is as follows. An accessory protein needed during the final step in the assembly of 30S ribosomal subunit, possibly for assembly of the head region. Essential for efficient processing of 16S rRNA. May be needed both before and after RbfA during the maturation of 16S rRNA. It has affinity for free ribosomal 30S subunits but not for 70S ribosomes. The chain is Ribosome maturation factor RimM from Amoebophilus asiaticus (strain 5a2).